The primary structure comprises 429 residues: Glutamate-1-semialdehyde 2,1-aminomutase 2 (429 aa).

Residue Lys268 is modified to N6-(pyridoxal phosphate)lysine.

Belongs to the class-III pyridoxal-phosphate-dependent aminotransferase family. HemL subfamily. In terms of assembly, homodimer. Pyridoxal 5'-phosphate serves as cofactor.

The protein localises to the cytoplasm. It catalyses the reaction (S)-4-amino-5-oxopentanoate = 5-aminolevulinate. The protein operates within porphyrin-containing compound metabolism; protoporphyrin-IX biosynthesis; 5-aminolevulinate from L-glutamyl-tRNA(Glu): step 2/2. The chain is Glutamate-1-semialdehyde 2,1-aminomutase 2 from Bacillus mycoides (strain KBAB4) (Bacillus weihenstephanensis).